The sequence spans 380 residues: Cytochrome b (380 aa).

The next 4 helical transmembrane spans lie at Phe-33 to Met-53, Trp-77 to Val-98, Trp-113 to Leu-133, and Phe-178 to Leu-198. Heme b is bound by residues His-83 and His-97. 2 residues coordinate heme b: His-182 and His-196. His-201 is an a ubiquinone binding site. 4 helical membrane-spanning segments follow: residues Thr-226–Ser-246, Leu-288–His-308, Leu-320–Gly-340, and Phe-347–Pro-367.

The protein belongs to the cytochrome b family. The cytochrome bc1 complex contains 11 subunits: 3 respiratory subunits (MT-CYB, CYC1 and UQCRFS1), 2 core proteins (UQCRC1 and UQCRC2) and 6 low-molecular weight proteins (UQCRH/QCR6, UQCRB/QCR7, UQCRQ/QCR8, UQCR10/QCR9, UQCR11/QCR10 and a cleavage product of UQCRFS1). This cytochrome bc1 complex then forms a dimer. It depends on heme b as a cofactor.

The protein resides in the mitochondrion inner membrane. Its function is as follows. Component of the ubiquinol-cytochrome c reductase complex (complex III or cytochrome b-c1 complex) that is part of the mitochondrial respiratory chain. The b-c1 complex mediates electron transfer from ubiquinol to cytochrome c. Contributes to the generation of a proton gradient across the mitochondrial membrane that is then used for ATP synthesis. The protein is Cytochrome b (MT-CYB) of Pan paniscus (Pygmy chimpanzee).